The sequence spans 1665 residues: Cortactin-binding protein 2 (1665 aa).

Residues 120-277 (RKMQERMSTQ…EQLKRGNDSK (158 aa)) adopt a coiled-coil conformation. 3 disordered regions span residues 203–222 (EKKK…RRST), 368–480 (VSSV…SPTS), and 500–620 (RFTS…PSID). Polar residues-rich tracts occupy residues 388–399 (SIGSTPDLASST) and 410–429 (TGQT…SMHS). Residues 455–469 (QGNANDQDQNGNTTQ) show a composition bias toward low complexity. Over residues 470–480 (SPPSRDVSPTS) the composition is skewed to polar residues. Arginine 500 carries the asymmetric dimethylarginine modification. 5 ANK repeats span residues 711–741 (GRPT…DINY), 745–774 (DGHS…QIDA), 778–807 (NGFT…NIDH), 811–840 (GGQT…DRSV), and 844–873 (DGWT…PTLG). A disordered region spans residues 875-902 (SLNEEEPEPGAFDLDQGQEGSEGTAKPV). The stretch at 914–944 (EGWTAAHIAASKGFKNCLEILCRHGGLEPER) is one ANK 6 repeat. The segment at 1447-1495 (CSKKKGENGAWRKVSTNPRKKSGRFSSPTWSKPDLGEEGTKNKTMSQPN) is disordered. Residue serine 1526 is modified to Phosphoserine. Residues 1575 to 1665 (NNLRMPVSQK…KNEQVQKPNK (91 aa)) are disordered. 2 stretches are compositionally biased toward low complexity: residues 1590–1604 (SSHQ…TSKT) and 1623–1641 (SQCS…TRQT). The span at 1656-1665 (KNEQVQKPNK) shows a compositional bias: polar residues.

As to quaternary structure, interacts with CTTN/cortactin SH3 domain. Interacts with STRN, STRN4/zinedin and MOB4/phocein; this interactions mediate the association with the STRIPAK core complex and may regulate dendritic spine distribution of the STRIPAK complex in hippocampal neurons. Activation of glutamate receptors weakens the interaction with STRN and STRN4.

It is found in the cytoplasm. Its subcellular location is the cell cortex. It localises to the cell projection. The protein localises to the dendritic spine. In terms of biological role, regulates the dendritic spine distribution of CTTN/cortactin in hippocampal neurons, and thus controls dendritic spinogenesis and dendritic spine maintenance. Associates with the striatin-interacting phosphatase and kinase (STRIPAK) core complex to regulate dendritic spine distribution of the STRIPAK complex in hippocampal neurons. The protein is Cortactin-binding protein 2 (CTTNBP2) of Dasypus novemcinctus (Nine-banded armadillo).